The sequence spans 101 residues: Protein Tat (101 aa).

An interaction with human CREBBP region spans residues 1–24 (MEPIDPNLEPWNHPGSQPKTACNN). The interval 1–48 (MEPIDPNLEPWNHPGSQPKTACNNCYCKQCCYHCQLCFTKKGLGISYG) is transactivation. 3 residues coordinate Zn(2+): C22, C25, and C27. The segment at 22–37 (CNNCYCKQCCYHCQLC) is cysteine-rich. K28 bears the N6-acetyllysine; by host PCAF mark. Zn(2+)-binding residues include C30, H33, C34, and C37. The tract at residues 38–48 (FTKKGLGISYG) is core. The interval 48-101 (GRRKRKQRRRTSESSQNHQDPVPKQPLSQPGGIETGQKKSKKEVESQTTSDQFA) is disordered. A Nuclear localization signal, RNA-binding (TAR), and protein transduction motif is present at residues 49–57 (RRKRKQRRR). The tract at residues 49–86 (RRKRKQRRRTSESSQNHQDPVPKQPLSQPGGIETGQKK) is interaction with the host capping enzyme RNGTT. The residue at position 51 (K51) is an N6-acetyllysine; by host EP300 and GCN5L2. The residue at position 52 (R52) is an Asymmetric dimethylarginine; by host PRMT6. Residue K71 forms a Glycyl lysine isopeptide (Lys-Gly) (interchain with G-Cter in ubiquitin) linkage.

Belongs to the lentiviruses Tat family. As to quaternary structure, interacts with host CCNT1. Associates with the P-TEFb complex composed at least of Tat, P-TEFb (CDK9 and CCNT1), TAR RNA, RNA Pol II. Recruits the HATs CREBBP, TAF1/TFIID, EP300, PCAF and GCN5L2. Interacts with host KAT5/Tip60; this interaction targets the latter to degradation. Interacts with the host deacetylase SIRT1. Interacts with host capping enzyme RNGTT; this interaction stimulates RNGTT. Binds to host KDR, and to the host integrins ITGAV/ITGB3 and ITGA5/ITGB1. Interacts with host KPNB1/importin beta-1 without previous binding to KPNA1/importin alpha-1. Interacts with EIF2AK2. Interacts with host nucleosome assembly protein NAP1L1; this interaction may be required for the transport of Tat within the nucleus, since the two proteins interact at the nuclear rim. Interacts with host C1QBP/SF2P32; this interaction involves lysine-acetylated Tat. Interacts with the host chemokine receptors CCR2, CCR3 and CXCR4. Interacts with host DPP4/CD26; this interaction may trigger an anti-proliferative effect. Interacts with host LDLR. Interacts with the host extracellular matrix metalloproteinase MMP1. Interacts with host PRMT6; this interaction mediates Tat's methylation. Interacts with, and is ubiquitinated by MDM2/Hdm2. Interacts with host PSMC3 and HTATIP2. Interacts with STAB1; this interaction may overcome SATB1-mediated repression of IL2 and IL2RA (interleukin) in T cells by binding to the same domain than HDAC1. Interacts (when acetylated) with human CDK13, thereby increasing HIV-1 mRNA splicing and promoting the production of the doubly spliced HIV-1 protein Nef. Interacts with host TBP; this interaction modulates the activity of transcriptional pre-initiation complex. Interacts with host RELA. Asymmetrical arginine methylation by host PRMT6 seems to diminish the transactivation capacity of Tat and affects the interaction with host CCNT1. In terms of processing, polyubiquitination by host MDM2 does not target Tat to degradation, but activates its transactivation function and fosters interaction with CCNT1 and TAR RNA. Post-translationally, phosphorylated by EIF2AK2 on serine and threonine residues adjacent to the basic region important for TAR RNA binding and function. Phosphorylation of Tat by EIF2AK2 is dependent on the prior activation of EIF2AK2 by dsRNA.

Its subcellular location is the host nucleus. It localises to the host nucleolus. It is found in the host cytoplasm. The protein resides in the secreted. Functionally, transcriptional activator that increases RNA Pol II processivity, thereby increasing the level of full-length viral transcripts. Recognizes a hairpin structure at the 5'-LTR of the nascent viral mRNAs referred to as the transactivation responsive RNA element (TAR) and recruits the cyclin T1-CDK9 complex (P-TEFb complex) that will in turn hyperphosphorylate the RNA polymerase II to allow efficient elongation. The CDK9 component of P-TEFb and other Tat-activated kinases hyperphosphorylate the C-terminus of RNA Pol II that becomes stabilized and much more processive. Other factors such as HTATSF1/Tat-SF1, SUPT5H/SPT5, and HTATIP2 are also important for Tat's function. Besides its effect on RNA Pol II processivity, Tat induces chromatin remodeling of proviral genes by recruiting the histone acetyltransferases (HATs) CREBBP, EP300 and PCAF to the chromatin. This also contributes to the increase in proviral transcription rate, especially when the provirus integrates in transcriptionally silent region of the host genome. To ensure maximal activation of the LTR, Tat mediates nuclear translocation of NF-kappa-B by interacting with host RELA. Through its interaction with host TBP, Tat may also modulate transcription initiation. Tat can reactivate a latently infected cell by penetrating in it and transactivating its LTR promoter. In the cytoplasm, Tat is thought to act as a translational activator of HIV-1 mRNAs. In terms of biological role, extracellular circulating Tat can be endocytosed by surrounding uninfected cells via the binding to several surface receptors such as CD26, CXCR4, heparan sulfate proteoglycans (HSPG) or LDLR. Neurons are rarely infected, but they internalize Tat via their LDLR. Through its interaction with nuclear HATs, Tat is potentially able to control the acetylation-dependent cellular gene expression. Modulates the expression of many cellular genes involved in cell survival, proliferation or in coding for cytokines or cytokine receptors. Tat plays a role in T-cell and neurons apoptosis. Tat induced neurotoxicity and apoptosis probably contribute to neuroAIDS. Circulating Tat also acts as a chemokine-like and/or growth factor-like molecule that binds to specific receptors on the surface of the cells, affecting many cellular pathways. In the vascular system, Tat binds to ITGAV/ITGB3 and ITGA5/ITGB1 integrins dimers at the surface of endothelial cells and competes with bFGF for heparin-binding sites, leading to an excess of soluble bFGF. This Pan troglodytes (Chimpanzee) protein is Protein Tat.